The chain runs to 432 residues: N-acylneuraminate cytidylyltransferase (432 aa).

Met-1 carries the N-acetylmethionine modification. A disordered region spans residues 1–38 (MDALEKGAATSGPAPRGRPSRGRPPKLQRSRGAGRGLE). The BC1 motif motif lies at 15–31 (PRGRPSRGRPPKLQRSR). Over residues 18–29 (RPSRGRPPKLQR) the composition is skewed to basic residues. Residues Arg-35 and Arg-50 each carry the omega-N-methylarginine modification. Positions 50, 60, 109, 118, 120, and 141 each coordinate substrate. Residues 198–204 (KRPRRQD) carry the BC2 motif motif. The active site involves Arg-199. The BC3 motif motif lies at 267 to 274 (KEKLKEIK).

The protein belongs to the CMP-NeuNAc synthase family. As to quaternary structure, homotetramer; the active enzyme is formed by a dimer of dimers. In terms of tissue distribution, liver.

The protein localises to the nucleus. It catalyses the reaction an N-acylneuraminate + CTP = a CMP-N-acyl-beta-neuraminate + diphosphate. The protein operates within amino-sugar metabolism; N-acetylneuraminate metabolism. Catalyzes the activation of N-acetylneuraminic acid (NeuNAc) to cytidine 5'-monophosphate N-acetylneuraminic acid (CMP-NeuNAc), a substrate required for the addition of sialic acid. Has some activity toward NeuNAc, N-glycolylneuraminic acid (Neu5Gc) or 2-keto-3-deoxy-D-glycero-D-galacto-nononic acid (KDN). This Rattus norvegicus (Rat) protein is N-acylneuraminate cytidylyltransferase (Cmas).